The sequence spans 431 residues: Cytochrome c oxidase subunit 3 (431 aa).

The next 7 membrane-spanning stretches (helical) occupy residues 70–90, 96–116, 132–152, 176–196, 321–341, 356–376, and 408–428; these read IAPL…FGVI, FVIA…SIVF, LVMG…SFFW, VYSY…SGAI, LYFT…EYYF, FLLT…IGII, and LFYW…IYWW.

This sequence belongs to the cytochrome c oxidase subunit 3 family. As to quaternary structure, component of the cytochrome c oxidase (complex IV, CIV), a multisubunit enzyme composed of a catalytic core of 3 subunits and several supernumerary subunits. The complex exists as a monomer or a dimer and forms supercomplexes (SCs) in the inner mitochondrial membrane with ubiquinol-cytochrome c oxidoreductase (cytochrome b-c1 complex, complex III, CIII).

It is found in the mitochondrion inner membrane. The catalysed reaction is 4 Fe(II)-[cytochrome c] + O2 + 8 H(+)(in) = 4 Fe(III)-[cytochrome c] + 2 H2O + 4 H(+)(out). Its function is as follows. Component of the cytochrome c oxidase, the last enzyme in the mitochondrial electron transport chain which drives oxidative phosphorylation. The respiratory chain contains 3 multisubunit complexes succinate dehydrogenase (complex II, CII), ubiquinol-cytochrome c oxidoreductase (cytochrome b-c1 complex, complex III, CIII) and cytochrome c oxidase (complex IV, CIV), that cooperate to transfer electrons derived from NADH and succinate to molecular oxygen, creating an electrochemical gradient over the inner membrane that drives transmembrane transport and the ATP synthase. Cytochrome c oxidase is the component of the respiratory chain that catalyzes the reduction of oxygen to water. Electrons originating from reduced cytochrome c in the intermembrane space (IMS) are transferred via the dinuclear copper A center (CU(A)) of subunit 2 and heme A of subunit 1 to the active site in subunit 1, a binuclear center (BNC) formed by heme A3 and copper B (CU(B)). The BNC reduces molecular oxygen to 2 water molecules using 4 electrons from cytochrome c in the IMS and 4 protons from the mitochondrial matrix. In Dictyostelium citrinum (Slime mold), this protein is Cytochrome c oxidase subunit 3 (cox3).